Here is a 94-residue protein sequence, read N- to C-terminus: Putative pterin-4-alpha-carbinolamine dehydratase (94 aa).

The protein belongs to the pterin-4-alpha-carbinolamine dehydratase family.

It carries out the reaction (4aS,6R)-4a-hydroxy-L-erythro-5,6,7,8-tetrahydrobiopterin = (6R)-L-erythro-6,7-dihydrobiopterin + H2O. The chain is Putative pterin-4-alpha-carbinolamine dehydratase from Koribacter versatilis (strain Ellin345).